We begin with the raw amino-acid sequence, 338 residues long: (2Z,6E)-hedycaryol synthase (338 aa).

Residues Asp-82 and Glu-87 each coordinate Mg(2+). Residues 82-87 (DDQIDE) carry the DDXXXE motif motif. Arg-175 contributes to the substrate binding site. Mg(2+) is bound by residues Asn-221 and Ser-225. The NXXXSXXXE motif signature appears at 221 to 229 (NDVFSVERE). Arg-228 is a substrate binding site. Glu-229 serves as a coordination point for Mg(2+).

This sequence belongs to the terpene synthase family. Homodimer. The cofactor is Mg(2+).

It carries out the reaction (2E,6E)-farnesyl diphosphate + H2O = (2Z,6E)-hedycaryol + diphosphate. It participates in secondary metabolite biosynthesis; terpenoid biosynthesis. In terms of biological role, catalyzes the conversion of (2E,6E)-farnesyl diphosphate (FPP) into (2Z,6E)-hedycaryol via a 1,11-cyclization. This chain is (2Z,6E)-hedycaryol synthase, found in Kitasatospora setae (strain ATCC 33774 / DSM 43861 / JCM 3304 / KCC A-0304 / NBRC 14216 / KM-6054) (Streptomyces setae).